The following is a 156-amino-acid chain: S-ribosylhomocysteine lyase (156 aa).

Fe cation-binding residues include H56, H60, and C123.

The protein belongs to the LuxS family. As to quaternary structure, homodimer. It depends on Fe cation as a cofactor.

The catalysed reaction is S-(5-deoxy-D-ribos-5-yl)-L-homocysteine = (S)-4,5-dihydroxypentane-2,3-dione + L-homocysteine. In terms of biological role, involved in the synthesis of autoinducer 2 (AI-2) which is secreted by bacteria and is used to communicate both the cell density and the metabolic potential of the environment. The regulation of gene expression in response to changes in cell density is called quorum sensing. Catalyzes the transformation of S-ribosylhomocysteine (RHC) to homocysteine (HC) and 4,5-dihydroxy-2,3-pentadione (DPD). This Staphylococcus aureus (strain bovine RF122 / ET3-1) protein is S-ribosylhomocysteine lyase.